Consider the following 204-residue polypeptide: Small ribosomal subunit protein uS4 (204 aa).

Positions 25–45 are disordered; that stretch reads AVPSRRAYPPGQHGQARKKRS. Residues 92-152 enclose the S4 RNA-binding domain; the sequence is MRLDNIIFRL…NKENSRRLAE (61 aa).

It belongs to the universal ribosomal protein uS4 family. As to quaternary structure, part of the 30S ribosomal subunit. Contacts protein S5. The interaction surface between S4 and S5 is involved in control of translational fidelity.

Its function is as follows. One of the primary rRNA binding proteins, it binds directly to 16S rRNA where it nucleates assembly of the body of the 30S subunit. Functionally, with S5 and S12 plays an important role in translational accuracy. The protein is Small ribosomal subunit protein uS4 of Cyanothece sp. (strain PCC 7425 / ATCC 29141).